Reading from the N-terminus, the 413-residue chain is Transmembrane protein 237B (413 aa).

The disordered stretch occupies residues 1–162 (MDPEAKVSSS…EDDDVITDPQ (162 aa)). The segment covering 112–122 (DLVSNGDTLDQ) has biased composition (polar residues). The next 4 helical transmembrane spans lie at 233–253 (VIGL…IIVV), 274–294 (LAYP…VSAF), 312–332 (LSPV…SLSQ), and 360–380 (ILYP…LAWI).

It belongs to the TMEM237 family.

The protein resides in the membrane. The protein localises to the cell projection. It localises to the cilium. Functionally, component of the transition zone in primary cilia. Required for ciliogenesis. In Danio rerio (Zebrafish), this protein is Transmembrane protein 237B (tmem237b).